The following is a 258-amino-acid chain: Acetylglutamate kinase (258 aa).

Substrate-binding positions include 44 to 45 (GG), R66, and N158. ATP-binding positions include 181 to 186 (DVSGIL) and 209 to 211 (IIT).

It belongs to the acetylglutamate kinase family. ArgB subfamily. In terms of assembly, homodimer.

The protein resides in the cytoplasm. It catalyses the reaction N-acetyl-L-glutamate + ATP = N-acetyl-L-glutamyl 5-phosphate + ADP. It functions in the pathway amino-acid biosynthesis; L-arginine biosynthesis; N(2)-acetyl-L-ornithine from L-glutamate: step 2/4. Functionally, catalyzes the ATP-dependent phosphorylation of N-acetyl-L-glutamate. This is Acetylglutamate kinase from Salmonella paratyphi A (strain ATCC 9150 / SARB42).